A 232-amino-acid polypeptide reads, in one-letter code: MKVGIIGAMEQEVTLLRDRIENRQTFQRAGCEIYTGQINGVDVALLKSGIGKVSAALGTTLLLEHSKPDVVINTGSAGGLAPSLNVGDIVVSDEVRYHDADVTAFGYEPGQMAGCPAAFAADEKLIALAQEAIADLQLNAVRGLVVSGDAFINGAEPLARIRTTFPKAIAVEMEATAIAHVCHQFAVPFVVVRAISDVADKASHLSFDEFLSVAAQQSTRMVEAILAKLAAR.

E12 acts as the Proton acceptor in catalysis. Residues G78, I152, and 173 to 174 (ME) contribute to the substrate site. The active-site Proton donor is D197.

This sequence belongs to the PNP/UDP phosphorylase family. MtnN subfamily. As to quaternary structure, homodimer.

The enzyme catalyses S-adenosyl-L-homocysteine + H2O = S-(5-deoxy-D-ribos-5-yl)-L-homocysteine + adenine. The catalysed reaction is S-methyl-5'-thioadenosine + H2O = 5-(methylsulfanyl)-D-ribose + adenine. It carries out the reaction 5'-deoxyadenosine + H2O = 5-deoxy-D-ribose + adenine. It functions in the pathway amino-acid biosynthesis; L-methionine biosynthesis via salvage pathway; S-methyl-5-thio-alpha-D-ribose 1-phosphate from S-methyl-5'-thioadenosine (hydrolase route): step 1/2. In terms of biological role, catalyzes the irreversible cleavage of the glycosidic bond in both 5'-methylthioadenosine (MTA) and S-adenosylhomocysteine (SAH/AdoHcy) to adenine and the corresponding thioribose, 5'-methylthioribose and S-ribosylhomocysteine, respectively. Also cleaves 5'-deoxyadenosine, a toxic by-product of radical S-adenosylmethionine (SAM) enzymes, into 5-deoxyribose and adenine. Thus, is required for in vivo function of the radical SAM enzymes biotin synthase and lipoic acid synthase, that are inhibited by 5'-deoxyadenosine accumulation. The polypeptide is 5'-methylthioadenosine/S-adenosylhomocysteine nucleosidase (Pectobacterium carotovorum subsp. carotovorum (strain PC1)).